Reading from the N-terminus, the 112-residue chain is Putative UPF0320 protein YEL074W (112 aa).

Positions Glu93–Lys112 are disordered.

It belongs to the UPF0320 family.

In Saccharomyces cerevisiae (strain ATCC 204508 / S288c) (Baker's yeast), this protein is Putative UPF0320 protein YEL074W.